The primary structure comprises 839 residues: NT-3 growth factor receptor (839 aa).

Positions 1-31 (MDVSLCPAKCSFWRIFLLGSVWLDYVGSVLA) are cleaved as a signal peptide. 2 cysteine pairs are disulfide-bonded: Cys-32-Cys-38 and Cys-36-Cys-45. Topologically, residues 32–429 (CPANCVCSKT…TVTHKPEEDT (398 aa)) are extracellular. N-linked (GlcNAc...) asparagine glycans are attached at residues Asn-72 and Asn-79. LRR repeat units lie at residues 104 to 125 (GLQK…AFAK) and 128 to 149 (HLRY…LFQT). Residues Asn-133 and Asn-163 are each glycosylated (N-linked (GlcNAc...) asparagine). Residues 160–209 (NFFNCSCDIRWMQLWQEQGEAKLNSQNLYCINADGSQLPLFRMNISQCDL) enclose the LRRCT domain. Intrachain disulfides connect Cys-164/Cys-189 and Cys-166/Cys-207. N-linked (GlcNAc...) asparagine glycosylation is found at Asn-203, Asn-218, Asn-232, Asn-259, Asn-267, Asn-272, and Asn-294. 2 consecutive Ig-like C2-type domains span residues 210–300 (PEIS…VALT) and 309–382 (SLEE…IAKN). Cys-231 and Cys-284 are disulfide-bonded. Cys-320 and Cys-362 are oxidised to a cystine. Asn-375 and Asn-388 each carry an N-linked (GlcNAc...) asparagine glycan. The helical transmembrane segment at 430–453 (FGVSIAVGLAAFACVLLVVLFVMI) threads the bilayer. The Cytoplasmic segment spans residues 454–839 (NKYGRRSKFG…ATPIYLDILG (386 aa)). Ser-493 is modified (phosphoserine). Tyr-516 bears the Phosphotyrosine; by autocatalysis mark. The region spanning 538–839 (IVLKRELGEG…ATPIYLDILG (302 aa)) is the Protein kinase domain. Residues 544-552 (LGEGAFGKV) and Lys-572 each bind ATP. The Proton acceptor role is filled by Asp-679. Tyr-705, Tyr-709, and Tyr-710 each carry phosphotyrosine; by autocatalysis.

Belongs to the protein kinase superfamily. Tyr protein kinase family. Insulin receptor subfamily. In terms of assembly, exists in a dynamic equilibrium between monomeric (low affinity) and dimeric (high affinity) structures. Binds SH2B2. Interacts with SQSTM1 and KIDINS220. Interacts with PTPRS. Interacts with MAPK8IP3/JIP3. In terms of processing, ligand-mediated auto-phosphorylation. In terms of tissue distribution, widely expressed but mainly in nervous tissue. Isoform 2 is expressed at higher levels in adult brain than in fetal brain.

It is found in the membrane. It catalyses the reaction L-tyrosyl-[protein] + ATP = O-phospho-L-tyrosyl-[protein] + ADP + H(+). Its function is as follows. Receptor tyrosine kinase involved in nervous system and probably heart development. Upon binding of its ligand NTF3/neurotrophin-3, NTRK3 autophosphorylates and activates different signaling pathways, including the phosphatidylinositol 3-kinase/AKT and the MAPK pathways, that control cell survival and differentiation. The sequence is that of NT-3 growth factor receptor (NTRK3) from Homo sapiens (Human).